A 682-amino-acid polypeptide reads, in one-letter code: RNA helicase NPH-II (682 aa).

Residues 181 to 354 (FELLRKRKQI…EFLPDVEFYH (174 aa)) form the Helicase ATP-binding domain. Residue 194-201 (GSTGIGKT) participates in ATP binding. The DEXH box motif lies at 303 to 306 (DEIH). The region spanning 386–551 (NISTTLNWCR…KFKLSLPNDL (166 aa)) is the Helicase C-terminal domain.

It belongs to the DEAD box helicase family. DEAH subfamily. Monomer.

It is found in the virion. The enzyme catalyses ATP + H2O = ADP + phosphate + H(+). In terms of biological role, NTP-dependent helicase that catalyzes unidirectional unwinding of 3'tailed duplex RNAs and plays an important role during transcription of early mRNAs, presumably by preventing R-loop formation behind the elongating RNA polymerase. Might also play a role in the export of newly synthesized mRNA chains out of the core into the cytoplasm. Required for replication and propagation of viral particles. The chain is RNA helicase NPH-II (NPH2) from Vertebrata (FPV).